The primary structure comprises 331 residues: Phosphoenolpyruvate transferase (331 aa).

Aspartate 63 contributes to the 7,8-didemethyl-8-hydroxy-5-deazariboflavin binding site.

This sequence belongs to the CofD family. In terms of assembly, homodimer. Requires Mg(2+) as cofactor.

The enzyme catalyses enolpyruvoyl-2-diphospho-5'-guanosine + 7,8-didemethyl-8-hydroxy-5-deazariboflavin = dehydro coenzyme F420-0 + GMP + H(+). It functions in the pathway cofactor biosynthesis; coenzyme F420 biosynthesis. Catalyzes the transfer of the phosphoenolpyruvate moiety from enoylpyruvoyl-2-diphospho-5'-guanosine (EPPG) to 7,8-didemethyl-8-hydroxy-5-deazariboflavin (FO) with the formation of dehydro coenzyme F420-0 and GMP. The chain is Phosphoenolpyruvate transferase from Mycobacterium bovis (strain ATCC BAA-935 / AF2122/97).